The sequence spans 392 residues: Formate-dependent phosphoribosylglycinamide formyltransferase (392 aa).

Residues 22–23 (EL) and E82 each bind N(1)-(5-phospho-beta-D-ribosyl)glycinamide. Residues R114, K155, 160–165 (SSGKGQ), 195–198 (EGVV), and E203 each bind ATP. One can recognise an ATP-grasp domain in the interval 119-308 (RLAAEELWVP…EFALHVRAFL (190 aa)). 2 residues coordinate Mg(2+): E267 and E279. N(1)-(5-phospho-beta-D-ribosyl)glycinamide is bound by residues D286, K355, and 362 to 363 (RR).

This sequence belongs to the PurK/PurT family. Homodimer.

It catalyses the reaction N(1)-(5-phospho-beta-D-ribosyl)glycinamide + formate + ATP = N(2)-formyl-N(1)-(5-phospho-beta-D-ribosyl)glycinamide + ADP + phosphate + H(+). It participates in purine metabolism; IMP biosynthesis via de novo pathway; N(2)-formyl-N(1)-(5-phospho-D-ribosyl)glycinamide from N(1)-(5-phospho-D-ribosyl)glycinamide (formate route): step 1/1. Functionally, involved in the de novo purine biosynthesis. Catalyzes the transfer of formate to 5-phospho-ribosyl-glycinamide (GAR), producing 5-phospho-ribosyl-N-formylglycinamide (FGAR). Formate is provided by PurU via hydrolysis of 10-formyl-tetrahydrofolate. This is Formate-dependent phosphoribosylglycinamide formyltransferase from Erwinia tasmaniensis (strain DSM 17950 / CFBP 7177 / CIP 109463 / NCPPB 4357 / Et1/99).